We begin with the raw amino-acid sequence, 185 residues long: Ribosome-recycling factor (185 aa).

The protein belongs to the RRF family.

The protein resides in the cytoplasm. Its function is as follows. Responsible for the release of ribosomes from messenger RNA at the termination of protein biosynthesis. May increase the efficiency of translation by recycling ribosomes from one round of translation to another. This chain is Ribosome-recycling factor, found in Vibrio vulnificus (strain YJ016).